Consider the following 426-residue polypeptide: Mannose-6-phosphate isomerase (426 aa).

Zn(2+) contacts are provided by Gln112, His114, Glu139, and His277. Arg296 is an active-site residue.

It belongs to the mannose-6-phosphate isomerase type 1 family. Zn(2+) is required as a cofactor.

The protein localises to the cytoplasm. It carries out the reaction D-mannose 6-phosphate = D-fructose 6-phosphate. It participates in nucleotide-sugar biosynthesis; GDP-alpha-D-mannose biosynthesis; alpha-D-mannose 1-phosphate from D-fructose 6-phosphate: step 1/2. Involved in the synthesis of the GDP-mannose and dolichol-phosphate-mannose required for a number of critical mannosyl transfer reactions. The polypeptide is Mannose-6-phosphate isomerase (PMI40) (Ogataea parapolymorpha (strain ATCC 26012 / BCRC 20466 / JCM 22074 / NRRL Y-7560 / DL-1) (Yeast)).